A 234-amino-acid polypeptide reads, in one-letter code: Probable flavin reductase (234 aa).

112 to 116 (GGTGL) is a binding site for pyridine.

Belongs to the Fre/LuxG FAD/NAD(P) flavoprotein oxidoreductase family.

Probable flavin reductase in the luminescent systems of different marine bacteria. The chain is Probable flavin reductase (luxG) from Photobacterium leiognathi.